The following is a 298-amino-acid chain: Movement protein BC1 (298 aa).

The disordered stretch occupies residues 253 to 273 (LPEASLDPGDSVSQTQSMTKK).

It belongs to the begomovirus movement protein BC1 family. Binds to dimeric supercoiled plasmid DNA. Post-translationally, phosphorylated.

It is found in the host cell membrane. The protein resides in the host microsome membrane. The protein localises to the host endoplasmic reticulum membrane. In terms of biological role, transports viral genome to neighboring plant cells directly through plasmosdesmata, without any budding. The movement protein allows efficient cell to cell propagation, by bypassing the host cell wall barrier. Begomovirus genome is shuttled out of nucleus by Nuclear shuttle protein (NSP) and the movement protein transports the DNA-NSP complex to cell plasmodesmata and facilitates further movement across the cell wall. The polypeptide is Movement protein BC1 (Hewittia sublobata (Coralbush)).